A 2968-amino-acid chain; its full sequence is Trinucleotide repeat-containing gene 18 protein (2968 aa).

2 disordered regions span residues 1-24 (MDGRDFGPQRSVHGPPPPLLSGLA) and 139-261 (GSPL…LAER). Residues 139 to 150 (GSPLLSQLGQPS) are compositionally biased toward low complexity. Basic and acidic residues-rich tracts occupy residues 221 to 233 (GKKDPRARGEEAS) and 243 to 260 (QEARAEGRQDRGPPRLAE). Ser263 is modified (phosphoserine). The segment covering 304–322 (GAKEAARQDEGARLLRRTE) has biased composition (basic and acidic residues). Disordered regions lie at residues 304–356 (GAKE…PAGV) and 381–488 (FDER…PAAQ). Residues 327–351 (GPRPCPSPLPPPPAPPKGPPAPPAA) show a composition bias toward pro residues. Basic and acidic residues-rich tracts occupy residues 395-405 (RDARAREREAG), 419-431 (PLDRPEGLREKNS), and 464-479 (ELLKPEADPRPCERAP). Ser611 is modified (phosphoserine). Disordered regions lie at residues 612–679 (PFGG…EVRH), 941–1002 (EHRA…SPVA), 1019–1055 (PAYAYPATPSSHPTSPPPASPPPTPGITRKEEAPENV), 1106–1190 (DADG…MATP), 1212–1236 (SCAEPSECPDFVEGPEPRVDSPGRT), 1279–1306 (LAQVAPSESQPTLEMSDCDVPAGEGQCP), 1497–1566 (KQRE…SDDY), and 1687–1855 (SLKS…RERA). Lys620 is covalently cross-linked (Glycyl lysine isopeptide (Lys-Gly) (interchain with G-Cter in SUMO2)). 2 stretches are compositionally biased toward basic and acidic residues: residues 651–660 (LKRDPERPES) and 941–955 (EHRAEMEEKGSKRGL). A coiled-coil region spans residues 916 to 949 (LQQQAAQALELQRSAQLVQERLKAQEHRAEMEEK). Composition is skewed to low complexity over residues 966–983 (AGPGLLPRKPPGLAAGPA) and 1019–1031 (PAYAYPATPSSHP). A compositionally biased stretch (pro residues) spans 1032–1043 (TSPPPASPPPTP). The segment covering 1046-1055 (TRKEEAPENV) has biased composition (basic and acidic residues). Phosphoserine occurs at positions 1127 and 1136. The segment covering 1142–1162 (EPLREGPEEEPLAEREVKAEV) has biased composition (basic and acidic residues). Positions 1171–1181 (ELPPLESPLPL) are enriched in pro residues. Positions 1481 to 1516 (LDFRMRLAEVQRQYKEKQRELVKLQRRRDSEDRREE) form a coiled coil. Positions 1497–1519 (KQRELVKLQRRRDSEDRREEPHR) are enriched in basic and acidic residues. Residues 1520 to 1534 (SLARRGPGRPRKRTH) show a composition bias toward basic residues. Residue Ser1540 is modified to Phosphoserine. Residues 1549 to 1563 (GHSSGKLSSKSLLTS) are compositionally biased toward low complexity. The segment covering 1816–1842 (SSEESFDQDESSEEEDEEEELEEEDEA) has biased composition (acidic residues). A phosphoserine mark is found at Ser1857 and Ser1863. Disordered regions lie at residues 1912–2148 (YTDS…LTPA) and 2295–2771 (LLVP…RLPS). 2 stretches are compositionally biased toward basic and acidic residues: residues 1957–1968 (SPDKAKLAVEKG) and 1993–2004 (LWTRRRSERIFL). Residues 2007-2024 (ASAAAPAPVSTAPATKTS) show a composition bias toward low complexity. The segment covering 2034 to 2046 (PRKDAGRAKDRKD) has biased composition (basic and acidic residues). Low complexity predominate over residues 2069–2085 (ALPSEARAPHASSLTAA). The segment covering 2093-2103 (KGKEVKKENRG) has biased composition (basic and acidic residues). A Phosphothreonine modification is found at Thr2146. Residues 2307–2316 (TSKDTGEGKD) are compositionally biased toward basic and acidic residues. Basic residues predominate over residues 2329-2338 (ARGRGRKPSA). A compositionally biased stretch (low complexity) spans 2365-2374 (EPSSTPGSKK). A compositionally biased stretch (basic and acidic residues) spans 2375 to 2384 (SPPEPVDKRA). A compositionally biased stretch (pro residues) spans 2390 to 2401 (RPAPPQPSPAPP). Over residues 2411–2433 (PFAELPAPATSLAPAPLITMPAT) the composition is skewed to low complexity. Composition is skewed to basic and acidic residues over residues 2441 to 2468 (RAAEESGAKGPRRPGEEAELLVKLDHEG) and 2477 to 2487 (AKEALLLREDP). Composition is skewed to low complexity over residues 2559–2580 (SSSSSSSGSSSSSSSSSSSGSE) and 2603–2671 (SAAS…SSSS). Positions 2673–2685 (TDEDSSCSSDDEA) are enriched in acidic residues. Positions 2723-2736 (APQPQAPPPQPTQP) are enriched in pro residues. Ser2771 carries the phosphoserine modification. A BAH domain is found at 2817-2962 (EMIRIGDCAV…PTTGMIFSTD (146 aa)).

The polypeptide is Trinucleotide repeat-containing gene 18 protein (Homo sapiens (Human)).